The primary structure comprises 829 residues: DNA ligase (829 aa).

Residues 1–23 (MPAQTSRARPVEEMTAAQAREAH) form a disordered region. NAD(+) contacts are provided by residues 47 to 51 (DAEYD), 96 to 97 (SL), and Glu130. Lys132 serves as the catalytic N6-AMP-lysine intermediate. Residues Arg153, Glu190, Lys306, and Lys330 each coordinate NAD(+). The Zn(2+) site is built by Cys453, Cys456, Cys477, and Cys483. The BRCT domain occupies 750 to 829 (AAAAVFSGQT…AEWLAMVEAA (80 aa)).

Belongs to the NAD-dependent DNA ligase family. LigA subfamily. Mg(2+) is required as a cofactor. The cofactor is Mn(2+).

The catalysed reaction is NAD(+) + (deoxyribonucleotide)n-3'-hydroxyl + 5'-phospho-(deoxyribonucleotide)m = (deoxyribonucleotide)n+m + AMP + beta-nicotinamide D-nucleotide.. Its function is as follows. DNA ligase that catalyzes the formation of phosphodiester linkages between 5'-phosphoryl and 3'-hydroxyl groups in double-stranded DNA using NAD as a coenzyme and as the energy source for the reaction. It is essential for DNA replication and repair of damaged DNA. The sequence is that of DNA ligase from Methylobacterium nodulans (strain LMG 21967 / CNCM I-2342 / ORS 2060).